The sequence spans 137 residues: Lysozyme (137 aa).

Positions methionine 1–alanine 20 are cleaved as a signal peptide. The 115-residue stretch at threonine 21–valine 135 folds into the I-type lysozyme domain. Intrachain disulfides connect cysteine 26–cysteine 102, cysteine 31–cysteine 37, cysteine 42–cysteine 51, cysteine 64–cysteine 84, cysteine 74–cysteine 80, and cysteine 98–cysteine 116. The active-site Proton donor is the glutamate 34. Aspartate 45 functions as the Nucleophile in the catalytic mechanism. Position 57–63 (lysine 57–aspartate 63) interacts with substrate. Substrate is bound by residues tyrosine 88 and histidine 109–glycine 111.

The protein belongs to the glycosyl hydrolase 22 family. Type-I lysozyme subfamily. Expressed in the basophil cells of the oyster digestive gland.

The protein resides in the secreted. The enzyme catalyses Hydrolysis of (1-&gt;4)-beta-linkages between N-acetylmuramic acid and N-acetyl-D-glucosamine residues in a peptidoglycan and between N-acetyl-D-glucosamine residues in chitodextrins.. Its function is as follows. Has bacteriolytic activity. May play a role in digestion and in the host defense mechanisms against invading microbes. The chain is Lysozyme (lysoz) from Magallana gigas (Pacific oyster).